We begin with the raw amino-acid sequence, 392 residues long: Chaperone protein DnaJ (392 aa).

Positions 2 to 67 (DYYDVLGVSK…QKRESYDRYG (66 aa)) constitute a J domain. The CR-type zinc-finger motif lies at 149–227 (GVEKELLVSG…CRGQGRIKDK (79 aa)). Residues Cys-162, Cys-165, Cys-179, Cys-182, Cys-201, Cys-204, Cys-215, and Cys-218 each contribute to the Zn(2+) site. CXXCXGXG motif repeat units lie at residues 162–169 (CETCLGSG), 179–186 (CDRCKGSG), 201–208 (CPECGGEG), and 215–222 (CSNCRGQG).

It belongs to the DnaJ family. As to quaternary structure, homodimer. Requires Zn(2+) as cofactor.

The protein resides in the cytoplasm. Functionally, participates actively in the response to hyperosmotic and heat shock by preventing the aggregation of stress-denatured proteins and by disaggregating proteins, also in an autonomous, DnaK-independent fashion. Unfolded proteins bind initially to DnaJ; upon interaction with the DnaJ-bound protein, DnaK hydrolyzes its bound ATP, resulting in the formation of a stable complex. GrpE releases ADP from DnaK; ATP binding to DnaK triggers the release of the substrate protein, thus completing the reaction cycle. Several rounds of ATP-dependent interactions between DnaJ, DnaK and GrpE are required for fully efficient folding. Also involved, together with DnaK and GrpE, in the DNA replication of plasmids through activation of initiation proteins. The polypeptide is Chaperone protein DnaJ (Chlamydia caviae (strain ATCC VR-813 / DSM 19441 / 03DC25 / GPIC) (Chlamydophila caviae)).